Consider the following 359-residue polypeptide: 4-hydroxy-3-methylbut-2-en-1-yl diphosphate synthase (flavodoxin) (359 aa).

Residues C265, C268, C300, and E307 each coordinate [4Fe-4S] cluster.

It belongs to the IspG family. It depends on [4Fe-4S] cluster as a cofactor.

The enzyme catalyses (2E)-4-hydroxy-3-methylbut-2-enyl diphosphate + oxidized [flavodoxin] + H2O + 2 H(+) = 2-C-methyl-D-erythritol 2,4-cyclic diphosphate + reduced [flavodoxin]. It participates in isoprenoid biosynthesis; isopentenyl diphosphate biosynthesis via DXP pathway; isopentenyl diphosphate from 1-deoxy-D-xylulose 5-phosphate: step 5/6. Its function is as follows. Converts 2C-methyl-D-erythritol 2,4-cyclodiphosphate (ME-2,4cPP) into 1-hydroxy-2-methyl-2-(E)-butenyl 4-diphosphate. The protein is 4-hydroxy-3-methylbut-2-en-1-yl diphosphate synthase (flavodoxin) of Lawsonia intracellularis (strain PHE/MN1-00).